Consider the following 341-residue polypeptide: S-adenosylmethionine:tRNA ribosyltransferase-isomerase (341 aa).

Belongs to the QueA family. Monomer.

The protein resides in the cytoplasm. It carries out the reaction 7-aminomethyl-7-carbaguanosine(34) in tRNA + S-adenosyl-L-methionine = epoxyqueuosine(34) in tRNA + adenine + L-methionine + 2 H(+). It participates in tRNA modification; tRNA-queuosine biosynthesis. Transfers and isomerizes the ribose moiety from AdoMet to the 7-aminomethyl group of 7-deazaguanine (preQ1-tRNA) to give epoxyqueuosine (oQ-tRNA). The polypeptide is S-adenosylmethionine:tRNA ribosyltransferase-isomerase (Clostridium botulinum (strain Alaska E43 / Type E3)).